Here is a 443-residue protein sequence, read N- to C-terminus: ATP-dependent protease ATPase subunit HslU (443 aa).

Residues isoleucine 18, 60–65 (GVGKTE), aspartate 256, glutamate 321, and arginine 393 each bind ATP.

This sequence belongs to the ClpX chaperone family. HslU subfamily. In terms of assembly, a double ring-shaped homohexamer of HslV is capped on each side by a ring-shaped HslU homohexamer. The assembly of the HslU/HslV complex is dependent on binding of ATP.

It localises to the cytoplasm. Functionally, ATPase subunit of a proteasome-like degradation complex; this subunit has chaperone activity. The binding of ATP and its subsequent hydrolysis by HslU are essential for unfolding of protein substrates subsequently hydrolyzed by HslV. HslU recognizes the N-terminal part of its protein substrates and unfolds these before they are guided to HslV for hydrolysis. This Salmonella agona (strain SL483) protein is ATP-dependent protease ATPase subunit HslU.